The following is a 182-amino-acid chain: Mesencephalic astrocyte-derived neurotrophic factor (182 aa).

A signal peptide spans 1–24 (MRRMWATQGLAVALALSVLPGSRA). Cystine bridges form between C30–C117, C33–C106, C64–C75, and C151–C154. Position 76 is a phosphotyrosine (Y76). Residues 96-158 (LAHHIPVEKI…ETCKGCAEKS (63 aa)) are interacts with ERN1, EIF2AK3 and ATF6. Positions 129–172 (TVDLKKLRVKELKKILDDWGETCKGCAEKSDYIRKINELMPKYA) are interacts with HSPA5.

This sequence belongs to the ARMET family. As to quaternary structure, interacts directly (via SAP domain) with HSPA5/BiP; the interaction inhibits ATP binding to HSPA5/BiP and subsequent nucleotide exchange. Component of a complex containing at least CRELD2, MANF, MATN3 and PDIA4. Interacts (via C-terminus) with ERN1 (via luminal domain); the interaction is decreased in the presence of increasing concentrations of Ca(2+). In terms of processing, may contain sialic acid residues.

It is found in the secreted. The protein localises to the endoplasmic reticulum lumen. Its subcellular location is the sarcoplasmic reticulum lumen. Its function is as follows. Selectively promotes the survival of dopaminergic neurons of the ventral mid-brain. Modulates GABAergic transmission to the dopaminergic neurons of the substantia nigra. Enhances spontaneous, as well as evoked, GABAergic inhibitory postsynaptic currents in dopaminergic neurons. Inhibits cell proliferation and endoplasmic reticulum (ER) stress-induced cell death. Retained in the ER/sarcoplasmic reticulum (SR) through association with the endoplasmic reticulum chaperone protein HSPA5 under normal conditions. Stabilizes HSPA5/BiP in its substrate-bound ADP state, which facilitates HSPA5/BiP incorporation into chaperone-client complexes during endoplasmic reticulum stress, its interaction with HSPA5/BiP inhibits ATP binding to HSPA5/BiP and subsequent nucleotide exchange. As a result acts as a repressor of the unfolded protein response (UPR) pathway. Up-regulated and secreted by the ER/SR in response to ER stress and hypoxia. Following secretion by the ER/SR, directly binds to 3-O-sulfogalactosylceramide, a lipid sulfatide in the outer cell membrane of target cells. Sulfatide binding promotes its cellular uptake by endocytosis, and is required for its role in alleviating ER stress and cell toxicity under hypoxic and ER stress conditions. Essential for embryonic lung development. Required for the correct postnatal temporal and structural development of splenic white pulp. Required for the repair-associated myeloid response in skeletal muscle, acts as a regulator of phenotypic transition towards prorepair macrophages in response to muscle injury and as a result limits excessive proinflammatory signaling. Represses RELA expression and therefore NF-kB signaling in the myocardium, as a result limits macrophage infiltration of injured tissue and M1 macrophage differentiation in response to myocardial injury. Required for endochondral ossification in long bones and the skull during postnatal development. This Homo sapiens (Human) protein is Mesencephalic astrocyte-derived neurotrophic factor.